A 364-amino-acid chain; its full sequence is Pre-small/secreted glycoprotein (364 aa).

The first 32 residues, 1–32, serve as a signal peptide directing secretion; sequence MGVTGILQLPRDRFKRTSFFLWVIILFQRTFS. The N-linked (GlcNAc...) asparagine; by host glycan is linked to Asn40. 2 disulfide bridges follow: Cys108-Cys135 and Cys121-Cys147. Residues Asn204, Asn228, Asn238, Asn257, and Asn268 are each glycosylated (N-linked (GlcNAc...) asparagine; by host).

Belongs to the filoviruses glycoprotein family. Homodimer; disulfide-linked. The homodimers are linked by two disulfide bonds in a parallel orientation. As to quaternary structure, monomer. In terms of processing, this precursor is processed into mature sGP and delta-peptide by host furin or furin-like proteases. The cleavage site corresponds to the furin optimal cleavage sequence [KR]-X-[KR]-R. N-glycosylated. Post-translationally, O-glycosylated.

Its subcellular location is the secreted. Seems to possess an anti-inflammatory activity as it can reverse the barrier-decreasing effects of TNF alpha. Might therefore contribute to the lack of inflammatory reaction seen during infection in spite the of extensive necrosis and massive virus production. Does not seem to be involved in activation of primary macrophages. Does not seem to interact specifically with neutrophils. Functionally, viroporin that permeabilizes mammalian cell plasma membranes. It acts by altering permeation of ionic compounds and small molecules. This activity may lead to viral enterotoxic activity. The polypeptide is Pre-small/secreted glycoprotein (GP) (Zaire ebolavirus (strain Eckron-76) (ZEBOV)).